Here is a 436-residue protein sequence, read N- to C-terminus: GTPase Der (436 aa).

2 EngA-type G domains span residues 4 to 167 (PVIA…PKIE) and 176 to 351 (IRFS…ESHS). GTP is bound by residues 10–17 (GRPNVGKS), 57–61 (DTGGI), 119–122 (NKVD), 182–189 (GRPNVGKS), 229–233 (DTAGM), and 294–297 (NKWD). Residues 352–436 (IRIQTNVLND…PIHIIARARD (85 aa)) enclose the KH-like domain.

The protein belongs to the TRAFAC class TrmE-Era-EngA-EngB-Septin-like GTPase superfamily. EngA (Der) GTPase family. As to quaternary structure, associates with the 50S ribosomal subunit.

Its function is as follows. GTPase that plays an essential role in the late steps of ribosome biogenesis. The sequence is that of GTPase Der from Bacillus cereus (strain ATCC 10987 / NRS 248).